We begin with the raw amino-acid sequence, 114 residues long: T cell receptor beta variable 27 (114 aa).

The first 21 residues, 1–21, serve as a signal peptide directing secretion; sequence MGPQLLGYVVLCLLGAGPLEA. Residues 22 to 114 form the Ig-like domain; sequence QVTQNPRYLI…TSLYFCASSL (93 aa). An intrachain disulfide couples cysteine 42 to cysteine 110. N-linked (GlcNAc...) asparagine glycosylation occurs at asparagine 103.

Alpha-beta TR is a heterodimer composed of an alpha and beta chain; disulfide-linked. The alpha-beta TR is associated with the transmembrane signaling CD3 coreceptor proteins to form the TR-CD3 (TcR or TCR). The assembly of alpha-beta TR heterodimers with CD3 occurs in the endoplasmic reticulum where a single alpha-beta TR heterodimer associates with one CD3D-CD3E heterodimer, one CD3G-CD3E heterodimer and one CD247 homodimer forming a stable octameric structure. CD3D-CD3E and CD3G-CD3E heterodimers preferentially associate with TR alpha and TR beta chains, respectively. The association of the CD247 homodimer is the last step of TcR assembly in the endoplasmic reticulum and is required for transport to the cell surface.

Its subcellular location is the cell membrane. V region of the variable domain of T cell receptor (TR) beta chain that participates in the antigen recognition. Alpha-beta T cell receptors are antigen specific receptors which are essential to the immune response and are present on the cell surface of T lymphocytes. Recognize peptide-major histocompatibility (MH) (pMH) complexes that are displayed by antigen presenting cells (APC), a prerequisite for efficient T cell adaptive immunity against pathogens. Binding of alpha-beta TR to pMH complex initiates TR-CD3 clustering on the cell surface and intracellular activation of LCK that phosphorylates the ITAM motifs of CD3G, CD3D, CD3E and CD247 enabling the recruitment of ZAP70. In turn ZAP70 phosphorylates LAT, which recruits numerous signaling molecules to form the LAT signalosome. The LAT signalosome propagates signal branching to three major signaling pathways, the calcium, the mitogen-activated protein kinase (MAPK) kinase and the nuclear factor NF-kappa-B (NF-kB) pathways, leading to the mobilization of transcription factors that are critical for gene expression and essential for T cell growth and differentiation. The T cell repertoire is generated in the thymus, by V-(D)-J rearrangement. This repertoire is then shaped by intrathymic selection events to generate a peripheral T cell pool of self-MH restricted, non-autoaggressive T cells. Post-thymic interaction of alpha-beta TR with the pMH complexes shapes TR structural and functional avidity. This is T cell receptor beta variable 27 from Homo sapiens (Human).